The primary structure comprises 430 residues: Agropine synthesis reductase (430 aa).

203–227 contributes to the NAD(+) binding site; sequence LISGPSRGIGKAIAENLIAHGYRMS. Residue serine 333 coordinates substrate. Tyrosine 346 serves as the catalytic Proton acceptor.

It belongs to the short-chain dehydrogenases/reductases (SDR) family.

It participates in opine metabolism; mannopine biosynthesis. Reduces deoxy-fructosyl-glutamine to mannopine. This Rhizobium rhizogenes (Agrobacterium rhizogenes) protein is Agropine synthesis reductase (mas1).